The sequence spans 211 residues: Protein-L-isoaspartate O-methyltransferase (211 aa).

Serine 60 is a catalytic residue.

The protein belongs to the methyltransferase superfamily. L-isoaspartyl/D-aspartyl protein methyltransferase family.

It localises to the cytoplasm. It catalyses the reaction [protein]-L-isoaspartate + S-adenosyl-L-methionine = [protein]-L-isoaspartate alpha-methyl ester + S-adenosyl-L-homocysteine. Catalyzes the methyl esterification of L-isoaspartyl residues in peptides and proteins that result from spontaneous decomposition of normal L-aspartyl and L-asparaginyl residues. It plays a role in the repair and/or degradation of damaged proteins. In Pseudomonas fluorescens (strain SBW25), this protein is Protein-L-isoaspartate O-methyltransferase.